The primary structure comprises 413 residues: Protein trichome birefringence-like 31 (413 aa).

Residues 12-34 (IQSIFQVVLVSLLVLGSVRWILD) traverse the membrane as a helical; Signal-anchor for type II membrane protein segment. The short motif at 141–143 (GDS) is the GDS motif element. The DCXHWCLPGXXDXWN motif signature appears at 384–398 (DCIHWCLPGVPDTWN).

Belongs to the PC-esterase family. TBL subfamily.

The protein resides in the membrane. May act as a bridging protein that binds pectin and other cell wall polysaccharides. Probably involved in maintaining esterification of pectins. May be involved in the specific O-acetylation of cell wall polymers. The polypeptide is Protein trichome birefringence-like 31 (TBL31) (Arabidopsis thaliana (Mouse-ear cress)).